Consider the following 143-residue polypeptide: MKLLKNNIYINVYLKNKQEIFEFVFKKFKEDGAVLDSFLPAIVERDKAASVAIGNYLFLPHPVYDEIANIQKEKMVFIGLKDVINIDGQPIKFICGLALKGEHQMDALQSLAIAFSDPEEVEKLVKDKDLTQDKVLEFLAKHN.

A PTS EIIA type-2 domain is found at 1–142 (MKLLKNNIYI…DKVLEFLAKH (142 aa)). Catalysis depends on histidine 61, which acts as the Tele-phosphohistidine intermediate. Position 61 is a phosphohistidine; by HPr (histidine 61).

It localises to the cytoplasm. The phosphoenolpyruvate-dependent sugar phosphotransferase system (sugar PTS), a major carbohydrate active transport system, catalyzes the phosphorylation of incoming sugar substrates concomitantly with their translocation across the cell membrane. The enzyme II CmtAB PTS system is involved in D-mannitol transport. This Mycoplasma pneumoniae (strain ATCC 29342 / M129 / Subtype 1) (Mycoplasmoides pneumoniae) protein is Mannitol-specific phosphotransferase enzyme IIA component (mtlF).